A 160-amino-acid polypeptide reads, in one-letter code: Transcription elongation factor GreA (160 aa).

The stretch at M1–R72 forms a coiled coil.

It belongs to the GreA/GreB family.

Functionally, necessary for efficient RNA polymerase transcription elongation past template-encoded arresting sites. The arresting sites in DNA have the property of trapping a certain fraction of elongating RNA polymerases that pass through, resulting in locked ternary complexes. Cleavage of the nascent transcript by cleavage factors such as GreA or GreB allows the resumption of elongation from the new 3'terminus. GreA releases sequences of 2 to 3 nucleotides. The sequence is that of Transcription elongation factor GreA from Streptococcus gordonii (strain Challis / ATCC 35105 / BCRC 15272 / CH1 / DL1 / V288).